Reading from the N-terminus, the 152-residue chain is Large ribosomal subunit protein bL9 (152 aa).

This sequence belongs to the bacterial ribosomal protein bL9 family.

In terms of biological role, binds to the 23S rRNA. This chain is Large ribosomal subunit protein bL9, found in Synechococcus sp. (strain CC9902).